The following is a 345-amino-acid chain: uncharacterized protein (345 aa).

Residues 1–198 form the CNNM transmembrane domain; it reads MDVLSAVLLA…LSEGLLDHEE (198 aa). The next 2 membrane-spanning stretches (helical) occupy residues 3–23 and 95–115; these read VLSAVLLALLLIGANAFFVGA and VPPALLHTLSLAIVVALHVLL. CBS domains are found at residues 217 to 280 and 285 to 342; these read AVPL…PQTV and VVRP…MRDG. Residues 312-332 traverse the membrane as a helical segment; it reads LALVTADNGSVVGMVALEDVV.

It belongs to the TerC family.

It localises to the cell membrane. This is an uncharacterized protein from Mycobacterium tuberculosis (strain CDC 1551 / Oshkosh).